The following is a 286-amino-acid chain: Protease HtpX homolog (286 aa).

Transmembrane regions (helical) follow at residues 7 to 27 and 29 to 49; these read TFMLMAAITALFIVIGGMIGG and SGMMLALLFALGMNFFSYWFS. Histidine 131 is a binding site for Zn(2+). Glutamate 132 is a catalytic residue. Residue histidine 135 participates in Zn(2+) binding. 2 helical membrane-spanning segments follow: residues 146–166 and 177–197; these read LSATMAGAISALANFAVFFGG and IAGIAVAILAPLAASLIQMAI. Glutamate 202 contacts Zn(2+).

This sequence belongs to the peptidase M48B family. The cofactor is Zn(2+).

The protein localises to the cell inner membrane. This is Protease HtpX homolog from Ralstonia nicotianae (strain ATCC BAA-1114 / GMI1000) (Ralstonia solanacearum).